A 312-amino-acid chain; its full sequence is Putative endo-1,4-beta-xylanase (312 aa).

One can recognise a GH10 domain in the interval 1–301; that stretch reads MKQQYLLDYE…KPCFYSFLQA (301 aa). Glu-104 acts as the Proton donor in catalysis. Glu-216 acts as the Nucleophile in catalysis.

The protein belongs to the glycosyl hydrolase 10 (cellulase F) family.

The enzyme catalyses Endohydrolysis of (1-&gt;4)-beta-D-xylosidic linkages in xylans.. It participates in glycan degradation; xylan degradation. Could be a xylanase. This is Putative endo-1,4-beta-xylanase from Caldicellulosiruptor saccharolyticus (Caldocellum saccharolyticum).